A 508-amino-acid polypeptide reads, in one-letter code: Maturase K (508 aa).

Belongs to the intron maturase 2 family. MatK subfamily.

Its subcellular location is the plastid. The protein localises to the chloroplast. In terms of biological role, usually encoded in the trnK tRNA gene intron. Probably assists in splicing its own and other chloroplast group II introns. This is Maturase K from Collinsia heterophylla (Purple Chinese houses).